We begin with the raw amino-acid sequence, 236 residues long: Ribosome maturation protein SDO1 homolog (236 aa).

This sequence belongs to the SDO1/SBDS family.

This Pyrococcus horikoshii (strain ATCC 700860 / DSM 12428 / JCM 9974 / NBRC 100139 / OT-3) protein is Ribosome maturation protein SDO1 homolog.